Reading from the N-terminus, the 175-residue chain is Ribosome maturation factor RimP (175 aa).

The interval 152–175 is disordered; sequence EFNRPTDGPGDDGDDGGDDEAGEA. The segment covering 160–175 has biased composition (acidic residues); it reads PGDDGDDGGDDEAGEA.

This sequence belongs to the RimP family.

It is found in the cytoplasm. Functionally, required for maturation of 30S ribosomal subunits. This is Ribosome maturation factor RimP from Nocardioides sp. (strain ATCC BAA-499 / JS614).